Consider the following 341-residue polypeptide: Outer membrane protein assembly factor BamD (341 aa).

A signal peptide spans M1–A17. C18 is lipidated: N-palmitoyl cysteine. C18 is lipidated: S-diacylglycerol cysteine. Residues D289–D316 show a composition bias toward basic and acidic residues. The segment at D289 to S330 is disordered. Acidic residues predominate over residues E317 to D326.

The protein belongs to the BamD family. As to quaternary structure, part of the Bam complex.

The protein localises to the cell outer membrane. Its function is as follows. Part of the outer membrane protein assembly complex, which is involved in assembly and insertion of beta-barrel proteins into the outer membrane. This Pseudomonas aeruginosa (strain ATCC 15692 / DSM 22644 / CIP 104116 / JCM 14847 / LMG 12228 / 1C / PRS 101 / PAO1) protein is Outer membrane protein assembly factor BamD.